The sequence spans 239 residues: RNA polymerase sigma factor FliA (239 aa).

Residues 16–88 are sigma-70 factor domain-2; it reads LWQRYVPLVR…MLDELRSRDW (73 aa). Residues 43-46 carry the Interaction with polymerase core subunit RpoC motif; the sequence is DLLQ. Residues 96–166 form a sigma-70 factor domain-3 region; that stretch reads NAREVAQAIG…IELVTDDHQR (71 aa). The segment at 185 to 233 is sigma-70 factor domain-4; that stretch reads AIETLPEREKLVLTLYYQEELNLKEIGAVLEVGESRVSQLHSQAIKRLR. The segment at residues 207–226 is a DNA-binding region (H-T-H motif); the sequence is LKEIGAVLEVGESRVSQLHS.

It belongs to the sigma-70 factor family. FliA subfamily.

Its subcellular location is the cytoplasm. In terms of biological role, sigma factors are initiation factors that promote the attachment of RNA polymerase to specific initiation sites and are then released. This sigma factor controls the expression of flagella-related genes. The protein is RNA polymerase sigma factor FliA of Escherichia coli O157:H7.